The following is a 256-amino-acid chain: Ribosomal RNA large subunit methyltransferase E (256 aa).

S-adenosyl-L-methionine contacts are provided by G50, W52, D69, D85, and D108. K148 acts as the Proton acceptor in catalysis. The TRAM domain occupies 195 to 253 (SLRKGDVVDVTIDAMGKTGDGIAHVDDFVVFVKGGSVGDKLKIKITDVKPSFAFADIVE).

This sequence belongs to the class I-like SAM-binding methyltransferase superfamily. RNA methyltransferase RlmE family.

It localises to the cytoplasm. It catalyses the reaction uridine(2552) in 23S rRNA + S-adenosyl-L-methionine = 2'-O-methyluridine(2552) in 23S rRNA + S-adenosyl-L-homocysteine + H(+). Specifically methylates the uridine in position 2552 of 23S rRNA at the 2'-O position of the ribose in the fully assembled 50S ribosomal subunit. The protein is Ribosomal RNA large subunit methyltransferase E of Methanocella arvoryzae (strain DSM 22066 / NBRC 105507 / MRE50).